A 349-amino-acid chain; its full sequence is Phenylalanine--tRNA ligase alpha subunit (349 aa).

A Mg(2+)-binding site is contributed by glutamate 259.

Belongs to the class-II aminoacyl-tRNA synthetase family. Phe-tRNA synthetase alpha subunit type 1 subfamily. Tetramer of two alpha and two beta subunits. It depends on Mg(2+) as a cofactor.

It is found in the cytoplasm. It catalyses the reaction tRNA(Phe) + L-phenylalanine + ATP = L-phenylalanyl-tRNA(Phe) + AMP + diphosphate + H(+). The chain is Phenylalanine--tRNA ligase alpha subunit from Lactobacillus johnsonii (strain CNCM I-12250 / La1 / NCC 533).